The primary structure comprises 101 residues: NAD(P)H-quinone oxidoreductase subunit 4L, chloroplastic (101 aa).

3 helical membrane-spanning segments follow: residues 2 to 22 (MLEHILVLSAYLFSIGIYGLI), 32 to 52 (MCLELILNAVNINFVTFSDFF), and 61 to 81 (IFSIFVIAIAAAEAAIGSAIV).

The protein belongs to the complex I subunit 4L family. In terms of assembly, NDH is composed of at least 16 different subunits, 5 of which are encoded in the nucleus.

The protein localises to the plastid. It localises to the chloroplast thylakoid membrane. It carries out the reaction a plastoquinone + NADH + (n+1) H(+)(in) = a plastoquinol + NAD(+) + n H(+)(out). The enzyme catalyses a plastoquinone + NADPH + (n+1) H(+)(in) = a plastoquinol + NADP(+) + n H(+)(out). Functionally, NDH shuttles electrons from NAD(P)H:plastoquinone, via FMN and iron-sulfur (Fe-S) centers, to quinones in the photosynthetic chain and possibly in a chloroplast respiratory chain. The immediate electron acceptor for the enzyme in this species is believed to be plastoquinone. Couples the redox reaction to proton translocation, and thus conserves the redox energy in a proton gradient. The chain is NAD(P)H-quinone oxidoreductase subunit 4L, chloroplastic from Gossypium hirsutum (Upland cotton).